The sequence spans 183 residues: Putative 3-methyladenine DNA glycosylase (183 aa).

Belongs to the DNA glycosylase MPG family.

This is Putative 3-methyladenine DNA glycosylase from Rickettsia conorii (strain ATCC VR-613 / Malish 7).